The chain runs to 503 residues: Mitochondrial antiviral-signaling protein (503 aa).

The Cytoplasmic portion of the chain corresponds to 1–478 (MTFAEDKTYK…HCASSMPWAK (478 aa)). Residues Lys7 and Lys10 each participate in a glycyl lysine isopeptide (Lys-Gly) (interchain with G-Cter in ubiquitin) cross-link. The CARD domain maps to 10-77 (KYIRDNHSKF…WVEVFIRALQ (68 aa)). The interval 10–77 (KYIRDNHSKF…WVEVFIRALQ (68 aa)) is required for interaction with NLRX1. Cys79 is lipidated: S-palmitoyl cysteine. Residues 119–202 (GPSAFAPGHN…HQEQEPELGG (84 aa)) form a disordered region. The interaction with TRAF2 stretch occupies residues 143-147 (PVQDT). The segment covering 145 to 166 (QDTQPPESPVENSEQLLQTNSG) has biased composition (polar residues). A phosphoserine mark is found at Ser152, Ser157, Ser172, Ser186, and Ser220. Residues 153–158 (PVENSE) form an interaction with TRAF6 1 region. Over residues 178-189 (PSPNQQALSPQP) the composition is skewed to polar residues. Position 234 is an asymmetric dimethylarginine (Arg234). A phosphoserine mark is found at Ser251 and Ser256. Lys302 participates in a covalent cross-link: Glycyl lysine isopeptide (Lys-Gly) (interchain with G-Cter in ubiquitin). An interaction with DHX33 region spans residues 337–503 (PSRVPASVAK…MLYRSRRLAQ (167 aa)). The tract at residues 346–398 (KAPANTIPPERNSKQAKETPEGPATKVTTGGNQTGPNSSIRSLHSGPEMSKPG) is disordered. The segment covering 356 to 365 (RNSKQAKETP) has biased composition (basic and acidic residues). Positions 371-387 (KVTTGGNQTGPNSSIRS) are enriched in polar residues. Ser384 carries the phosphoserine modification. Positions 415 to 418 (LAIS) match the pLxIS motif motif. At Ser418 the chain carries Phosphoserine; by TBK1. The interaction with TRAF6 2 stretch occupies residues 431-436 (PEENEY). The disordered stretch occupies residues 446 to 466 (SPSADLLGSPEPLATQQPQEE). Residues 479–496 (WLGATSALLAVFLAVMLY) form a helical membrane-spanning segment. At 497 to 503 (RSRRLAQ) the chain is on the mitochondrial intermembrane side.

Self-associates and polymerizes (via CARD domains) to form 400 nM long three-stranded helical filaments on mitochondria, filament nucleation requires interaction with RIGI whose CARD domains act as a template for filament assembly. Interacts with RIGI, IFIH1/MDA5, TRAF2, TRAF6 and C1QBP. May interact with FADD, RIPK1, IKBKE, CHUK and IKBKB. Interacts (when phosphorylated) with IRF3; following activation and phosphorylation on the pLxIS motif by TBK1, recruits IRF3. Interacts with NLRX1. Interaction with NLRX1 requires the CARD domain. Interacts with PSMA7. Interacts with TRAFD1. Interacts (via C-terminus) with PCBP2 in a complex containing MAVS/IPS1, PCBP2 and ITCH. Interacts with CYLD. Interacts with SRC. Interacts with DHX58/LGP2 and IKBKE. Interacts with STING1. Interacts with IFIT3 (via N-terminus). Interacts with TBK1 only in the presence of IFIT3. Interacts with TTLL12; the interaction prevents MAVS binding to TBK1 and IKBKE. Interacts with MUL1. Interacts with ANKRD17. Interacts with NDFIP1. Interacts with SMURF1; the interaction is mediated by NDFIP1 and leads to MAVS ubiquitination and degradation. Interacts (via C-terminus) with GPATCH3; the interaction is markedly increased upon viral infection. Directly interacts (via CARD domain) with ATG5 and ATG12, either as ATG5 and ATG12 monomers or as ATG12-ATG5 conjugates. Interacts with DHX33 (via the helicase C-terminal domain). Interacts with DDX3X (via C-terminus); this interaction may occur rapidly, but transiently after viral infection. The interaction with DDX3X potentiates MAVS-mediated IFNB induction. Conversely inhibition of this interaction prevents MAVS-mediated IFNB induction. Transiently interacts with TRAF3 early during viral infection. Interacts with CLPB. Interacts with TRAF3IP3. Interacts with TOMM70; the interaction is enhanced by virus infection. Interacts with ZNFX1. Interacts with DHX15. Interacts with N4BP3; this interaction promotes the polyubiquitination of MAVS. Interacts with TAX1BP1; this interaction induces MAVS polyubiquitination. Interacts with NLRP3; promoting NLRP3 recruitment to mitochondria and activation of the NLRP3 inflammasome. Interacts with ECSIT; this interaction bridges RIGI to the MAVS complex at the mitochondrion. Interacts with UBL7; this interaction promotes MAVS 'Lys-27'-linked ubiquitination leading to type I interferon production. Interacts (via transmembrane domain) with SMIM30/MAVI1 (via transmembrane domain); the interaction disrupts MAVS interaction with RIGI and inhibits MAVS aggregation, resulting in the repression of type I interferon signaling and innate immune responses. Post-translationally, following activation, phosphorylated by TBK1 at Ser-418 in the pLxIS motif. The phosphorylated pLxIS motif constitutes an IRF3-binding motif, leading to recruitment of the transcription factor IRF3 to induce type-I interferons and other cytokines. In terms of processing, ubiquitinated. Undergoes 'Lys-48'-linked polyubiquitination catalyzed by ITCH; ITCH-dependent polyubiquitination is mediated by the interaction with PCBP2 and leads to MAVS/IPS1 proteasomal degradation. Ubiquitinated by RNF125, leading to its degradation by the proteasome. Undergoes 'Lys-48'-linked ubiquitination catalyzed by SMURF1. Undergoes 'Lys-48'-linked ubiquitination catalyzed by MARCHF5 at Lys-7, leading to proteasomal degradation. Ubiquitinated via 'Lys-63'-linked ubiquitination at Lys-10 by TRIM31, promoting MAVS polymerization and formation of three-stranded helical filaments on mitochondria. Undergoes 'Lys-63'-linked ubiquitination leading to enhanced interaction between MAVS and TRAF2. Undergoes 'Lys-27'-linked ubiquitination by UBE2N and TRIM21 leading to enhanced interaction between MAVS and TBK1. Deubiquitinated by USP10 leading to attenuation of RIGI-mediated MAVS aggregation and production of type I interferon. Undergoes 'Lys-48'-linked polyubiquitination catalyzed by RNF115 leading to its degradation. Proteolytically cleaved by apoptotic caspases during apoptosis, leading to its inactivation. Cleavage by CASP3 during virus-induced apoptosis inactivates it, preventing cytokine overproduction. Post-translationally, palmitoylated by ZHDDC4. Palmitoylation promotes MAVS stabilization and activation by inhibiting 'Lys-48'- but facilitating 'Lys-63'-linked ubiquitination.

The protein localises to the mitochondrion outer membrane. The protein resides in the mitochondrion. Its subcellular location is the peroxisome. Its function is as follows. Adapter required for innate immune defense against viruses. Acts downstream of DHX33, RIGI and IFIH1/MDA5, which detect intracellular dsRNA produced during viral replication, to coordinate pathways leading to the activation of NF-kappa-B, IRF3 and IRF7, and to the subsequent induction of antiviral cytokines such as IFN-beta and RANTES (CCL5). Peroxisomal and mitochondrial MAVS act sequentially to create an antiviral cellular state. Upon viral infection, peroxisomal MAVS induces the rapid interferon-independent expression of defense factors that provide short-term protection, whereas mitochondrial MAVS activates an interferon-dependent signaling pathway with delayed kinetics, which amplifies and stabilizes the antiviral response. May activate the same pathways following detection of extracellular dsRNA by TLR3. May protect cells from apoptosis. Involved in NLRP3 inflammasome activation by mediating NLRP3 recruitment to mitochondria. The polypeptide is Mitochondrial antiviral-signaling protein (Mus musculus (Mouse)).